Here is a 532-residue protein sequence, read N- to C-terminus: ATP-dependent RNA helicase DBP3 (532 aa).

Residues 1–78 are disordered; sequence MGKRDRTEDD…EVAEEKPKMT (78 aa). The segment covering 15 to 58 has biased composition (basic residues); the sequence is KKVKLDKKDKKEKKEKKDKKDKKDKKDKKDKKDKKEKKEKKEKK. Residues 126-152 carry the Q motif motif; the sequence is MEFSHVTLDPRITKVLTKFPRPTPIQA. The region spanning 155-327 is the Helicase ATP-binding domain; it reads WPYLLAGKDM…EGFMKTPTKV (173 aa). 168 to 175 serves as a coordination point for ATP; it reads AETGSGKT. The DEAD box signature appears at 274-277; the sequence is DEAD. The 147-residue stretch at 356-502 folds into the Helicase C-terminal domain; that stretch reads RLLDLLRQYA…PVPDELLKFG (147 aa).

It belongs to the DEAD box helicase family. DDX5/DBP2 subfamily.

The protein localises to the nucleus. It localises to the nucleolus. The catalysed reaction is ATP + H2O = ADP + phosphate + H(+). Functionally, ATP-dependent RNA helicase required for 60S ribosomal subunit synthesis. Involved in efficient pre-rRNA processing, predominantly at site A3, which is necessary for the normal formation of 25S and 5.8S rRNAs. The sequence is that of ATP-dependent RNA helicase DBP3 (DBP3) from Yarrowia lipolytica (strain CLIB 122 / E 150) (Yeast).